The primary structure comprises 166 residues: NADPH-dependent 7-cyano-7-deazaguanine reductase (166 aa).

Cys-57 serves as the catalytic Thioimide intermediate. Asp-64 serves as the catalytic Proton donor. Substrate contacts are provided by residues Val-79 to Ser-81 and His-98 to Glu-99.

The protein belongs to the GTP cyclohydrolase I family. QueF type 1 subfamily.

The protein resides in the cytoplasm. It catalyses the reaction 7-aminomethyl-7-carbaguanine + 2 NADP(+) = 7-cyano-7-deazaguanine + 2 NADPH + 3 H(+). It participates in tRNA modification; tRNA-queuosine biosynthesis. Catalyzes the NADPH-dependent reduction of 7-cyano-7-deazaguanine (preQ0) to 7-aminomethyl-7-deazaguanine (preQ1). This chain is NADPH-dependent 7-cyano-7-deazaguanine reductase, found in Alkaliphilus metalliredigens (strain QYMF).